A 1384-amino-acid polypeptide reads, in one-letter code: DNA-directed RNA polymerase subunit beta'' (1384 aa).

C224, C297, C304, and C307 together coordinate Zn(2+).

Belongs to the RNA polymerase beta' chain family. RpoC2 subfamily. In plastids the minimal PEP RNA polymerase catalytic core is composed of four subunits: alpha, beta, beta', and beta''. When a (nuclear-encoded) sigma factor is associated with the core the holoenzyme is formed, which can initiate transcription. It depends on Zn(2+) as a cofactor.

The protein resides in the plastid. Its subcellular location is the chloroplast. The catalysed reaction is RNA(n) + a ribonucleoside 5'-triphosphate = RNA(n+1) + diphosphate. Its function is as follows. DNA-dependent RNA polymerase catalyzes the transcription of DNA into RNA using the four ribonucleoside triphosphates as substrates. The polypeptide is DNA-directed RNA polymerase subunit beta'' (Sinapis alba (White mustard)).